A 577-amino-acid polypeptide reads, in one-letter code: Guanine nucleotide-binding protein-like 3-like protein (577 aa).

Over residues 1–30 (MMKIRHKNKKPGKGSKGCKKPARQNGKKVT) the composition is skewed to basic residues. The segment at 1-75 (MMKIRHKNKK…VAREQERQRH (75 aa)) is disordered. A required for nucleolar localization region spans residues 9 to 28 (KKPGKGSKGCKKPARQNGKK). The span at 42 to 75 (GNDHASREAELKKKRVEEMREKQQVAREQERQRH) shows a compositional bias: basic and acidic residues. The stretch at 43–103 (NDHASREAEL…QKEEVLQELN (61 aa)) forms a coiled coil. The region spanning 118 to 304 (YKEFRKVVEY…LLDAPGIVPG (187 aa)) is the CP-type G domain. GTP is bound by residues 166–169 (NKID), 253–260 (GLPNVGKS), and 297–300 (DAPG).

It belongs to the TRAFAC class YlqF/YawG GTPase family. As to quaternary structure, interacts with MDM2; this interaction, which occurs in the nucleoplasm, stabilizes MDM2. Indirectly interacts with TP53, via MDM2-binding. Interacts with TERF1; this interaction probably occurs in the nucleoplasm and is increased during mitosis, when the nucleolus is disassembled. This binding may promote TERF1 homodimerization. Interacts with TERT.

The protein resides in the nucleus. The protein localises to the nucleolus. Functionally, stabilizes TERF1 telomeric association by preventing TERF1 recruitment by PML. Stabilizes TERF1 protein by preventing its ubiquitination and hence proteasomal degradation. Does so by interfering with TERF1-binding to FBXO4 E3 ubiquitin-protein ligase. Required for cell proliferation. By stabilizing TRF1 protein during mitosis, promotes metaphase-to-anaphase transition. Stabilizes MDM2 protein by preventing its ubiquitination, and hence proteasomal degradation. By acting on MDM2, may affect TP53 activity. Required for normal processing of ribosomal pre-rRNA. Binds GTP. The polypeptide is Guanine nucleotide-binding protein-like 3-like protein (Gnl3l) (Mus musculus (Mouse)).